The primary structure comprises 295 residues: MFKLLSFANAPAIVRANQKDSYFESRLHNQLLDVVKAIKGSHFVHKYPEELRTLATALYLCLTTLVGSKTLGEEYVDLVYVSRDGRKIPKFASRFGFVVAYVLFPYAVRQLLQKLKAQQSRLAQLVSGVSYMNVMDLLNLHLALFYFTGKYYQFAKRLFGLRYAFGYRVDKNQQRARGNYELLGLLIIFQTVFKNVANLRKLWGATKTVQDSGDLIYRFRDQTSDVIDLADPKVLPYLPEASRTCMLCLSPMKDPSCGECGHVFCWKCVLDWVKERQECPLCRAKMRESQLLPLR.

The Peroxisomal matrix portion of the chain corresponds to 1-9 (MFKLLSFAN). Residues 10–39 (APAIVRANQKDSYFESRLHNQLLDVVKAIK) traverse the membrane as a helical segment. Position 40 (Gly-40) is a topological domain, cytoplasmic. A helical membrane pass occupies residues 41-62 (SHFVHKYPEELRTLATALYLCL). At 63–108 (TTLVGSKTLGEEYVDLVYVSRDGRKIPKFASRFGFVVAYVLFPYAV) the chain is on the peroxisomal matrix side. Residues 109–120 (RQLLQKLKAQQS) traverse the membrane as a helical segment. The Cytoplasmic portion of the chain corresponds to 121 to 122 (RL). Residues 123–148 (AQLVSGVSYMNVMDLLNLHLALFYFT) traverse the membrane as a helical segment. The Peroxisomal matrix segment spans residues 149–179 (GKYYQFAKRLFGLRYAFGYRVDKNQQRARGN). A helical membrane pass occupies residues 180 to 199 (YELLGLLIIFQTVFKNVANL). The Cytoplasmic segment spans residues 200 to 295 (RKLWGATKTV…MRESQLLPLR (96 aa)). Residues Cys-245, Cys-248, Cys-260, His-262, Cys-265, Cys-268, Cys-279, and Cys-282 each coordinate Zn(2+). The segment at 245 to 283 (CMLCLSPMKDPSCGECGHVFCWKCVLDWVKERQECPLCR) adopts an RING-type zinc-finger fold.

Belongs to the pex2/pex10/pex12 family. As to quaternary structure, component of the PEX2-PEX10-PEX12 retrotranslocation channel, composed of PEX2, PEX10 and PEX12.

It localises to the peroxisome membrane. The catalysed reaction is S-ubiquitinyl-[E2 ubiquitin-conjugating enzyme]-L-cysteine + [acceptor protein]-L-lysine = [E2 ubiquitin-conjugating enzyme]-L-cysteine + N(6)-ubiquitinyl-[acceptor protein]-L-lysine.. The protein operates within protein modification; protein ubiquitination. With respect to regulation, the E3 ubiquitin-protein ligase activity is stimulated by PEX12. Its function is as follows. E3 ubiquitin-protein ligase component of a retrotranslocation channel required for peroxisome organization by mediating export of the PEX5 receptor from peroxisomes to the cytosol, thereby promoting PEX5 recycling. The retrotranslocation channel is composed of PEX2, PEX10 and PEX12; each subunit contributing transmembrane segments that coassemble into an open channel that specifically allows the passage of PEX5 through the peroxisomal membrane. PEX10 also regulates PEX5 recycling by acting as a E3 ubiquitin-protein ligase. When PEX5 recycling is compromised, PEX10 catalyzes polyubiquitination of PEX5 during its passage through the retrotranslocation channel, leading to its degradation. This chain is Peroxisome biogenesis factor 10 (PEX10), found in Pichia angusta (Yeast).